Here is a 499-residue protein sequence, read N- to C-terminus: Alpha-internexin (499 aa).

Positions 1 to 87 are head; sequence MSFGSEHYLC…SQAAARTNEY (87 aa). Ser-72 carries the phosphoserine modification. Residues 88–129 form a coil 1A region; the sequence is KIIRTNEKEQLQGLNDRFAVFIEKVHQLETQNRALEAELAAL. The region spanning 94–407 is the IF rod domain; the sequence is EKEQLQGLND…KLLEGEETRF (314 aa). The linker 1 stretch occupies residues 130–142; that stretch reads RQRHAEPSRVGEL. The interval 143-238 is coil 1B; sequence FQRELRDLRA…QVHDEEVAEL (96 aa). Ser-219 is modified (phosphoserine). Residues 239–262 are linker 2; sequence LATLQASSQAAAEVDVTVAKPDLT. Positions 263–408 are coil 2; that stretch reads SALREIRAQY…LLEGEETRFS (146 aa). Lys-290 is modified (N6-acetyllysine). The residue at position 335 (Ser-335) is a Phosphoserine. Residues 409-499 form a tail region; the sequence is TSGLSISGLN…EETTISSQKI (91 aa). The tract at residues 441-466 is disordered; that stretch reads STGLSLKKEEEEEEASKVASKKTSQI. Residues Ser-469 and Ser-496 each carry the phosphoserine modification.

It belongs to the intermediate filament family. Forms homodimers (in vitro). Forms heterodimers with NEFL, NEFM or NEFH (in vitro). Post-translationally, O-glycosylated. As to expression, found predominantly in adult CNS.

Functionally, class-IV neuronal intermediate filament that is able to self-assemble. It is involved in the morphogenesis of neurons. It may form an independent structural network without the involvement of other neurofilaments or it may cooperate with NEFL to form the filamentous backbone to which NEFM and NEFH attach to form the cross-bridges. May also cooperate with the neuronal intermediate filament protein PRPH to form filamentous networks. The chain is Alpha-internexin (INA) from Homo sapiens (Human).